A 294-amino-acid chain; its full sequence is Sulfotransferase 1E1 (294 aa).

Position 47–52 (47–52 (KSGTTW)) interacts with 3'-phosphoadenylyl sulfate. 105–107 (KTH) is a binding site for substrate. H107 (proton acceptor) is an active-site residue. 3'-phosphoadenylyl sulfate is bound by residues R129, S137, Y192, 226-231 (TSFQEM), and 256-258 (RKG).

The protein belongs to the sulfotransferase 1 family. In terms of assembly, homodimer. Liver, intestine and at lower level in the kidney.

It is found in the cytoplasm. Its subcellular location is the cytosol. It carries out the reaction estrone + 3'-phosphoadenylyl sulfate = estrone 3-sulfate + adenosine 3',5'-bisphosphate + H(+). It catalyses the reaction (24S)-hydroxycholesterol + 3'-phosphoadenylyl sulfate = (24S)-hydroxycholesterol 3-sulfate + adenosine 3',5'-bisphosphate + H(+). The catalysed reaction is 17beta-estradiol + 3'-phosphoadenylyl sulfate = 17beta-estradiol 3-sulfate + adenosine 3',5'-bisphosphate + H(+). The enzyme catalyses 3beta-hydroxyandrost-5-en-17-one + 3'-phosphoadenylyl sulfate = dehydroepiandrosterone 3-sulfate + adenosine 3',5'-bisphosphate + H(+). It carries out the reaction 4-ethylphenol + 3'-phosphoadenylyl sulfate = 4-ethylphenyl sulfate + adenosine 3',5'-bisphosphate + H(+). With respect to regulation, inhibited by estradiol. Its function is as follows. Sulfotransferase that utilizes 3'-phospho-5'-adenylyl sulfate (PAPS) as sulfonate donor to catalyze the sulfate conjugation of estradiol and estrone. Is a key enzyme in estrogen homeostasis, the sulfation of estrogens leads to their inactivation. Also sulfates dehydroepiandrosterone (DHEA), pregnenolone, (24S)-hydroxycholesterol and xenobiotic compounds like ethinylestradiol, equalenin, diethyl stilbesterol and 1-naphthol at significantly lower efficiency. Does not sulfonate cortisol, testosterone and dopamine. May play a role in gut microbiota-host metabolic interaction. O-sulfonates 4-ethylphenol (4-EP), a dietary tyrosine-derived metabolite produced by gut bacteria. The product 4-EPS crosses the blood-brain barrier and may negatively regulate oligodendrocyte maturation and myelination, affecting the functional connectivity of different brain regions associated with the limbic system. In Homo sapiens (Human), this protein is Sulfotransferase 1E1 (SULT1E1).